Consider the following 565-residue polypeptide: Oxygen-dependent choline dehydrogenase (565 aa).

Residue 7–36 coordinates FAD; sequence DYIICGAGSAGNVLATRLTEDPGVTVLLLE. H474 serves as the catalytic Proton acceptor.

This sequence belongs to the GMC oxidoreductase family. FAD is required as a cofactor.

It catalyses the reaction choline + A = betaine aldehyde + AH2. The enzyme catalyses betaine aldehyde + NAD(+) + H2O = glycine betaine + NADH + 2 H(+). The protein operates within amine and polyamine biosynthesis; betaine biosynthesis via choline pathway; betaine aldehyde from choline (cytochrome c reductase route): step 1/1. Involved in the biosynthesis of the osmoprotectant glycine betaine. Catalyzes the oxidation of choline to betaine aldehyde and betaine aldehyde to glycine betaine at the same rate. In Burkholderia mallei (strain ATCC 23344), this protein is Oxygen-dependent choline dehydrogenase.